The following is a 120-amino-acid chain: Large ribosomal subunit protein uL18 (120 aa).

Residues 1 to 10 show a composition bias toward basic and acidic residues; it reads MKLNRVESTR. A disordered region spans residues 1–26; the sequence is MKLNRVESTRSRHRRVRRKVGGTGDR. Basic residues predominate over residues 11–20; the sequence is SRHRRVRRKV.

Belongs to the universal ribosomal protein uL18 family. As to quaternary structure, part of the 50S ribosomal subunit; part of the 5S rRNA/L5/L18/L25 subcomplex. Contacts the 5S and 23S rRNAs.

In terms of biological role, this is one of the proteins that bind and probably mediate the attachment of the 5S RNA into the large ribosomal subunit, where it forms part of the central protuberance. This is Large ribosomal subunit protein uL18 from Cyanothece sp. (strain PCC 7425 / ATCC 29141).